The chain runs to 375 residues: Aminomethyltransferase (375 aa).

This sequence belongs to the GcvT family. In terms of assembly, the glycine cleavage system is composed of four proteins: P, T, L and H.

The catalysed reaction is N(6)-[(R)-S(8)-aminomethyldihydrolipoyl]-L-lysyl-[protein] + (6S)-5,6,7,8-tetrahydrofolate = N(6)-[(R)-dihydrolipoyl]-L-lysyl-[protein] + (6R)-5,10-methylene-5,6,7,8-tetrahydrofolate + NH4(+). In terms of biological role, the glycine cleavage system catalyzes the degradation of glycine. This Cupriavidus taiwanensis (strain DSM 17343 / BCRC 17206 / CCUG 44338 / CIP 107171 / LMG 19424 / R1) (Ralstonia taiwanensis (strain LMG 19424)) protein is Aminomethyltransferase.